The chain runs to 765 residues: Transcription factor SKN7 (765 aa).

The interval 1 to 42 (MPPTNGEGGSQQPQQQQQQQQQQQQQQQQQQQQQQGGSGSSD) is disordered. The segment covering 11-35 (QQPQQQQQQQQQQQQQQQQQQQQQQ) has biased composition (low complexity). The tract at residues 40 to 145 (SSDFVRKLYK…NLDNIRRKAP (106 aa)) is DNA-binding domain. Residues 157–198 (FNASQQQIAALSESLQATQQQLQALQQQCYELEKTNRLLVSE) adopt a coiled-coil conformation. The tract at residues 160-220 (SQQQIAALSE…QASNEIINHL (61 aa)) is hydrophobic repeat HR-A/B. Positions 371–391 (SSSQITPSQITPPPKDQMSSM) are disordered. The Response regulatory domain maps to 398 to 514 (RVLLVEDDKT…NMSRLLRRHL (117 aa)). Asp-449 bears the 4-aspartylphosphate mark. The segment at 542–765 (TAGPATTGVG…PGVGVAGFVQ (224 aa)) is transactivation domain. Over residues 550–564 (VGVGVAGAPSGGAHG) the composition is skewed to gly residues. Disordered regions lie at residues 550–647 (VGVG…PAGL) and 686–765 (PGAM…GFVQ). Positions 569–584 (AQHQQGYAMAPPTTMQ) are enriched in low complexity. Positions 626–636 (QPPPPPTPTQP) are enriched in pro residues. Composition is skewed to low complexity over residues 637-647 (SPTSAAPPAGL) and 699-715 (GVGHPAPSGAGSAAGAR). Positions 755 to 765 (HPGVGVAGFVQ) are enriched in gly residues.

This sequence belongs to the SKN7 family. In terms of assembly, homotrimer.

Its subcellular location is the nucleus. Functionally, transcription factor that is part of a SLN1-YPD1-SKN7 two-component regulatory system, which controls gene expression in response to changes in the osmolarity of the extracellular environment. Under low osmotic conditions, phosphorylated and activated by the phosphorelay intermediate protein YPD1. Also activated in response to oxidative stress, independent on the two-component regulatory system. Regulates heat shock genes in response to oxidative stress and genes involved in cell wall integrity in response to osmotic changes. The protein is Transcription factor SKN7 of Chaetomium thermophilum (strain DSM 1495 / CBS 144.50 / IMI 039719) (Thermochaetoides thermophila).